The chain runs to 472 residues: Phosphoenolpyruvate carboxylase (472 aa).

Belongs to the PEPCase type 2 family. As to quaternary structure, homotetramer. It depends on Mg(2+) as a cofactor.

It carries out the reaction oxaloacetate + phosphate = phosphoenolpyruvate + hydrogencarbonate. Functionally, catalyzes the irreversible beta-carboxylation of phosphoenolpyruvate (PEP) to form oxaloacetate (OAA), a four-carbon dicarboxylic acid source for the tricarboxylic acid cycle. In Pyrococcus furiosus (strain ATCC 43587 / DSM 3638 / JCM 8422 / Vc1), this protein is Phosphoenolpyruvate carboxylase.